The following is a 316-amino-acid chain: L-lactate dehydrogenase 3 (316 aa).

NAD(+) contacts are provided by Val16, Asp37, Arg42, and Tyr68. Residue Arg91 coordinates substrate. Residues Ser104, 121 to 123, and Thr146 each bind NAD(+); that span reads ASN. Substrate is bound at residue 123-126; the sequence is NPVD. Residue 151 to 154 coordinates substrate; the sequence is DSSR. Positions 156 and 171 each coordinate beta-D-fructose 1,6-bisphosphate. Catalysis depends on His178, which acts as the Proton acceptor. Residue Thr233 participates in substrate binding.

The protein belongs to the LDH/MDH superfamily. LDH family. As to quaternary structure, homotetramer.

The protein localises to the cytoplasm. The catalysed reaction is (S)-lactate + NAD(+) = pyruvate + NADH + H(+). It functions in the pathway fermentation; pyruvate fermentation to lactate; (S)-lactate from pyruvate: step 1/1. Its activity is regulated as follows. Allosterically activated by fructose 1,6-bisphosphate (FBP). In terms of biological role, catalyzes the conversion of lactate to pyruvate. The polypeptide is L-lactate dehydrogenase 3 (Bacillus anthracis).